Reading from the N-terminus, the 230-residue chain is Thioredoxin domain-containing protein PLP3B (230 aa).

The Thioredoxin domain maps to 89–173; sequence VSEGDFLGEV…GIAMDRLVGF (85 aa). The interval 199–230 is disordered; it reads EKRKEEDEEDYEYQESIRRSVRSSANVDSDSD. Residues 220–230 show a composition bias toward polar residues; sequence RSSANVDSDSD.

It belongs to the phosducin family. As to quaternary structure, interacts with TUBB2, TUBB3, TUBB4 and TUBB5. As to expression, expressed in roots, cotyledons, leaves, stems and flowers.

The protein resides in the cytoplasm. The protein localises to the nucleus. Tubulin-binding protein involved in microtubule formation. The protein is Thioredoxin domain-containing protein PLP3B (PLP3B) of Arabidopsis thaliana (Mouse-ear cress).